A 397-amino-acid polypeptide reads, in one-letter code: Serine/threonine-protein kinase 17A (397 aa).

Positions 1–23 are disordered; that stretch reads MIPLEKPGSGGSPSAAASGSGPG. At S9 the chain carries Phosphoserine. In terms of domain architecture, Protein kinase spans 44 to 304; sequence LSPGRELGRG…AEECLKHPWL (261 aa). Residues 50–58 and K73 each bind ATP; that span reads LGRGKFAVV. The active-site Proton acceptor is the D169.

The protein belongs to the protein kinase superfamily. CAMK Ser/Thr protein kinase family. DAP kinase subfamily. Post-translationally, autophosphorylated. As to expression, highly expressed in bone marrow. Lower levels in brain, heart, lung, liver and kidney.

Its subcellular location is the nucleus. The enzyme catalyses L-seryl-[protein] + ATP = O-phospho-L-seryl-[protein] + ADP + H(+). The catalysed reaction is L-threonyl-[protein] + ATP = O-phospho-L-threonyl-[protein] + ADP + H(+). Inhibited by thiazolidinedione-type compounds: inhibited by furan- and pyridone- thiazolidinediones. Acts as a positive regulator of apoptosis. May also act as a regulator of cellular reactive oxygen species. The protein is Serine/threonine-protein kinase 17A (STK17A) of Oryctolagus cuniculus (Rabbit).